The following is a 291-amino-acid chain: Pca regulon regulatory protein (291 aa).

Positions 1–22 are disordered; it reads MSDETLVNDPVNPEPARPASAA. Residues 45 to 105 form the HTH iclR-type domain; the sequence is MTSLARGLAV…SDGRTYSLLP (61 aa). The H-T-H motif DNA-binding region spans 67 to 86; it reads IAQISHRTEIPRAAVRRCLH. One can recognise an IclR-ED domain in the interval 120–291; it reads LAISAQPYLD…SRDLCHQLFG (172 aa).

Functionally, positive regulator of all genes within the pca regulon, pcaBDC, pcaIJ and pcaF. Also required for the chemotactic response to aromatic compounds. This chain is Pca regulon regulatory protein (pcaR), found in Pseudomonas putida (Arthrobacter siderocapsulatus).